Here is a 409-residue protein sequence, read N- to C-terminus: Serine/threonine transporter SstT (409 aa).

9 consecutive transmembrane segments (helical) span residues 14 to 34 (GNLI…GFIA), 57 to 77 (GALK…SIII), 89 to 109 (IIIL…VVSF), 149 to 169 (AISS…GIAL), 190 to 210 (IVKF…ATSV), 224 to 244 (LLLV…AAIV), 296 to 316 (ISIP…IAVL), 338 to 358 (IIAA…LMLI), and 365 to 385 (FGIS…IGVV).

It belongs to the dicarboxylate/amino acid:cation symporter (DAACS) (TC 2.A.23) family.

The protein localises to the cell inner membrane. It catalyses the reaction L-serine(in) + Na(+)(in) = L-serine(out) + Na(+)(out). The catalysed reaction is L-threonine(in) + Na(+)(in) = L-threonine(out) + Na(+)(out). In terms of biological role, involved in the import of serine and threonine into the cell, with the concomitant import of sodium (symport system). This Campylobacter fetus subsp. fetus (strain 82-40) protein is Serine/threonine transporter SstT.